Consider the following 76-residue polypeptide: ATP synthase peripheral stalk subunit F6, mitochondrial (76 aa).

Lysine 9, lysine 14, and lysine 47 each carry N6-acetyllysine. Residues lysine 52 and lysine 67 each carry the N6-acetyllysine; alternate modification. Lysine 52 and lysine 67 each carry N6-succinyllysine; alternate. An N6-acetyllysine modification is found at lysine 73. A Phosphoserine modification is found at serine 76.

Belongs to the eukaryotic ATPase subunit F6 family. As to quaternary structure, component of the ATP synthase complex composed at least of ATP5F1A/subunit alpha, ATP5F1B/subunit beta, ATP5MC1/subunit c (homooctomer), MT-ATP6/subunit a, MT-ATP8/subunit 8, ATP5ME/subunit e, ATP5MF/subunit f, ATP5MG/subunit g, ATP5MK/subunit k, ATP5MJ/subunit j, ATP5F1C/subunit gamma, ATP5F1D/subunit delta, ATP5F1E/subunit epsilon, ATP5PF/subunit F6, ATP5PB/subunit b, ATP5PD/subunit d, ATP5PO/subunit OSCP. ATP synthase complex consists of a soluble F(1) head domain (subunits alpha(3) and beta(3)) - the catalytic core - and a membrane F(0) domain - the membrane proton channel (subunits c, a, 8, e, f, g, k and j). These two domains are linked by a central stalk (subunits gamma, delta, and epsilon) rotating inside the F1 region and a stationary peripheral stalk (subunits F6, b, d, and OSCP).

Its subcellular location is the mitochondrion. The protein localises to the mitochondrion inner membrane. In terms of biological role, subunit F6, of the mitochondrial membrane ATP synthase complex (F(1)F(0) ATP synthase or Complex V) that produces ATP from ADP in the presence of a proton gradient across the membrane which is generated by electron transport complexes of the respiratory chain. ATP synthase complex consist of a soluble F(1) head domain - the catalytic core - and a membrane F(1) domain - the membrane proton channel. These two domains are linked by a central stalk rotating inside the F(1) region and a stationary peripheral stalk. During catalysis, ATP synthesis in the catalytic domain of F(1) is coupled via a rotary mechanism of the central stalk subunits to proton translocation. In vivo, can only synthesize ATP although its ATP hydrolase activity can be activated artificially in vitro. Part of the complex F(0) domain. Part of the complex F(0) domain and the peripheric stalk, which acts as a stator to hold the catalytic alpha(3)beta(3) subcomplex and subunit a/ATP6 static relative to the rotary elements. In Sus scrofa (Pig), this protein is ATP synthase peripheral stalk subunit F6, mitochondrial.